The chain runs to 347 residues: NADH-ubiquinone oxidoreductase chain 2 (347 aa).

9 helical membrane-spanning segments follow: residues 1-21, 59-79, 93-115, 149-169, 178-198, 201-221, 239-259, 274-294, and 325-345; these read MNPF…MIVM, YFMT…INLL, TASM…HFWV, INPN…GWGG, IMAY…IYNP, TILN…MFAL, IITT…PLTG, DSII…YFYM, and LLPT…MLVV.

It belongs to the complex I subunit 2 family. In terms of assembly, core subunit of respiratory chain NADH dehydrogenase (Complex I) which is composed of 45 different subunits. Interacts with TMEM242.

It is found in the mitochondrion inner membrane. It catalyses the reaction a ubiquinone + NADH + 5 H(+)(in) = a ubiquinol + NAD(+) + 4 H(+)(out). Core subunit of the mitochondrial membrane respiratory chain NADH dehydrogenase (Complex I) which catalyzes electron transfer from NADH through the respiratory chain, using ubiquinone as an electron acceptor. Essential for the catalytic activity and assembly of complex I. This is NADH-ubiquinone oxidoreductase chain 2 from Hippopotamus amphibius (Hippopotamus).